The chain runs to 322 residues: UPF0324 membrane protein BB4178 (322 aa).

The next 10 membrane-spanning stretches (helical) occupy residues Phe-13 to Phe-35, Phe-50 to Ile-69, Gly-76 to Gly-98, Thr-108 to Phe-127, Ala-139 to His-161, Ala-171 to Ile-193, Val-209 to Ala-231, Val-241 to Leu-260, Val-273 to Ile-292, and Gly-296 to Val-318.

The protein belongs to the UPF0324 family.

The protein localises to the cell membrane. The polypeptide is UPF0324 membrane protein BB4178 (Bordetella bronchiseptica (strain ATCC BAA-588 / NCTC 13252 / RB50) (Alcaligenes bronchisepticus)).